The following is a 151-amino-acid chain: Deoxyuridine 5'-triphosphate nucleotidohydrolase (151 aa).

Substrate is bound by residues 70 to 72, Asn-83, 87 to 89, and Met-97; these read RSG and LID.

The protein belongs to the dUTPase family. Mg(2+) is required as a cofactor.

It catalyses the reaction dUTP + H2O = dUMP + diphosphate + H(+). The protein operates within pyrimidine metabolism; dUMP biosynthesis; dUMP from dCTP (dUTP route): step 2/2. In terms of biological role, this enzyme is involved in nucleotide metabolism: it produces dUMP, the immediate precursor of thymidine nucleotides and it decreases the intracellular concentration of dUTP so that uracil cannot be incorporated into DNA. The polypeptide is Deoxyuridine 5'-triphosphate nucleotidohydrolase (Haemophilus influenzae (strain 86-028NP)).